The following is a 187-amino-acid chain: Basic helix-loop-helix transcription factor scleraxis (187 aa).

Disordered regions lie at residues 21–83 and 140–163; these read LSED…TNSV and AFFH…QPKQ. Residues 34 to 43 show a composition bias toward basic and acidic residues; it reads SDEKPFHLDA. Residues 50 to 72 show a composition bias toward basic residues; that stretch reads AGKRRSGKKAGRLHREPRQRHTA. The 53-residue stretch at 67 to 119 folds into the bHLH domain; it reads RQRHTANARERDRTNSVNTAFTALRTLIPTEPADRKLSKIETLRLASSYISHL.

In terms of assembly, efficient DNA binding requires dimerization with another bHLH protein. Dimerizes and binds the E-box consensus sequence with E12. In terms of tissue distribution, expressed in the intersomitic, the superficial proximomedial limb mesenchyme and the subectodermal mesenchyme.

The protein resides in the nucleus. In terms of biological role, plays an early essential role in mesoderm formation, as well as a later role in formation of somite-derived chondrogenic lineages. This Gallus gallus (Chicken) protein is Basic helix-loop-helix transcription factor scleraxis (SCX).